Here is a 584-residue protein sequence, read N- to C-terminus: MEVIHGQPYCCRELEGADILSDTFYSNELHTPLETATRPTASEDRYQKFRQSLQRCRLPWGAEREYGGMIPISLPEEHRPKCEPPRVMGKGHQHYGFGGEIWPRKLPIEQFYYLSQNKKSDIYGNDSLLPKPPNSTVGEICSPYPIEHPYHTHISRGAMFPTFTSPKDLYTGIKARTQQPFPPTVPTKPYDTTVLKTRGNPYRYELLDFPMDSKKKALVWPGQRVYFDLPKCVEKNKPVFYPKPPKTFAPNTSLNSWDPITSLKEVNIQRNLEKSHWITSYNHDFTGLGPMNPLELDDYHEKEVAELTGQIGFDPEPQEKVHPALKPTRPLEGRIARLIQNQRPLEAILEQRPSSCPDCTPRVLCTFHTFVPSSTEMMALSDNIPADVTHKNQEIEEKIKEEQSLLSTYALPSCYPTKDLANTYDIKPFPKITDTKKTEDLYWRQLSLKPQLIPYCNPDHYIPYEHLNQYNVYQNPVSLSKPGILQSKPDLKTFDFEHFLSKPEQLTLNMEDDEETKPILGWIPRAGVAKPQTDLLELKNAFSKTGAQKRFHKSVLEDYKDLRDKEHLGKKHQFYGHNSYYFYN.

Its subcellular location is the cytoplasm. The protein resides in the cytoskeleton. It localises to the microtubule organizing center. It is found in the centrosome. The protein localises to the flagellum axoneme. Microtubule inner protein (MIP) part of the dynein-decorated doublet microtubules (DMTs) in flagellum axoneme. May serve to reinforce and thus stabilize the microtubule structure in the sperm flagella. In Bos taurus (Bovine), this protein is Sperm-associated microtubule inner protein 4 (SPMIP4).